A 484-amino-acid chain; its full sequence is Cobyric acid synthase (484 aa).

The GATase cobBQ-type domain maps to 249 to 438; the sequence is QLRVAVPVFT…LHGIFDRPET (190 aa). Cys330 (nucleophile) is an active-site residue. The active site involves His430.

Belongs to the CobB/CobQ family. CobQ subfamily.

It participates in cofactor biosynthesis; adenosylcobalamin biosynthesis. In terms of biological role, catalyzes amidations at positions B, D, E, and G on adenosylcobyrinic A,C-diamide. NH(2) groups are provided by glutamine, and one molecule of ATP is hydrogenolyzed for each amidation. The polypeptide is Cobyric acid synthase (Vibrio cholerae serotype O1 (strain ATCC 39541 / Classical Ogawa 395 / O395)).